A 253-amino-acid chain; its full sequence is MDLATLLGLIGGFAFVIMAMVLGGSIGMFVDVTSILIVVGGSIFVVLMKFTMGQFFGATKIAGKAFMFKADEPEDLIAKIVEMADAARKGGFLALEEMEINNTFMQKGIDLLVDGHDADVVRAALKKDIALTDERHTQGTGVFRAFGDVAPAMGMIGTLVGLVAMLSNMDDPKAIGPAMAVALLTTLYGAILSNMVFFPIADKLSLRRDQETLNRRLIMDGVLAIQDGQNPRVIDSYLKNYLNEGKRALEIDE.

The next 4 membrane-spanning stretches (helical) occupy residues 6-26, 28-48, 146-166, and 180-200; these read LLGL…GGSI, MFVD…VVLM, FGDV…VAML, and AVAL…FFPI. At 201-253 the chain is on the cytoplasmic side; that stretch reads ADKLSLRRDQETLNRRLIMDGVLAIQDGQNPRVIDSYLKNYLNEGKRALEIDE.

It belongs to the MotA family. As to quaternary structure, each stator complex is composed of 4 PomA and 2 PomB subunits. 2 A subunits and 1 B subunit are thought to form a single ion channel, so that each stator complex contains two channels.

It is found in the cell inner membrane. Functionally, pomA and PomB comprise the stator element of the flagellar motor complex. Required for rotation of the flagellar motor. Probable transmembrane proton channel. This is Chemotaxis protein PomA (pomA) from Vibrio alginolyticus.